A 298-amino-acid polypeptide reads, in one-letter code: MRNHTMVTEFILLGIPETEGLETALLFLFSSFYLCTLLGNVLILTAIISSTRLHTPMYFFLGNLSIFDLGFSSTTVPKMLFYLSGNSHAISYAGCVSQLFFYHFLGCTECFLYTVMACDRFVAICFPLRYTVIMNHRVCFMLATGTWMIGCVHAMILTPLTFQLPYCGPNKVGYYFCDIPAVLPLACKDTSLAQRVGFTNVGLLSLICFFLILVSYTCIGISISKIRSAEGRQRAFSTCSAHLTAILCAYGPVIVIYLQPNPSALLGSIIQILNNLVTPMLNPLIYSLRNKDVKSDQP.

The Extracellular portion of the chain corresponds to 1-23; it reads MRNHTMVTEFILLGIPETEGLET. Asn-3 carries N-linked (GlcNAc...) asparagine glycosylation. A helical transmembrane segment spans residues 24 to 44; the sequence is ALLFLFSSFYLCTLLGNVLIL. Over 45-52 the chain is Cytoplasmic; that stretch reads TAIISSTR. Residues 53–73 traverse the membrane as a helical segment; sequence LHTPMYFFLGNLSIFDLGFSS. Residues 74 to 97 lie on the Extracellular side of the membrane; that stretch reads TTVPKMLFYLSGNSHAISYAGCVS. An intrachain disulfide couples Cys-95 to Cys-187. The helical transmembrane segment at 98 to 118 threads the bilayer; the sequence is QLFFYHFLGCTECFLYTVMAC. The Cytoplasmic portion of the chain corresponds to 119–137; it reads DRFVAICFPLRYTVIMNHR. Residues 138–158 form a helical membrane-spanning segment; that stretch reads VCFMLATGTWMIGCVHAMILT. At 159–195 the chain is on the extracellular side; it reads PLTFQLPYCGPNKVGYYFCDIPAVLPLACKDTSLAQR. A helical membrane pass occupies residues 196–215; it reads VGFTNVGLLSLICFFLILVS. The Cytoplasmic portion of the chain corresponds to 216–235; it reads YTCIGISISKIRSAEGRQRA. A helical membrane pass occupies residues 236–256; that stretch reads FSTCSAHLTAILCAYGPVIVI. The Extracellular segment spans residues 257-267; the sequence is YLQPNPSALLG. The chain crosses the membrane as a helical span at residues 268–288; sequence SIIQILNNLVTPMLNPLIYSL. Residues 289-298 lie on the Cytoplasmic side of the membrane; the sequence is RNKDVKSDQP.

It belongs to the G-protein coupled receptor 1 family.

Its subcellular location is the cell membrane. Functionally, odorant receptor. The protein is Putative olfactory receptor 10D4 (OR10D4P) of Homo sapiens (Human).